The chain runs to 726 residues: Catalase-peroxidase (726 aa).

The tract at residues 1–33 (MSTSDDIHNTTATGKCPFHQGGHDQSAGGGTTT) is disordered. The tryptophyl-tyrosyl-methioninium (Trp-Tyr) (with M-252) cross-link spans 105–226 (WHGAGTYRSI…LGATEMGLIY (122 aa)). His-106 functions as the Proton acceptor in the catalytic mechanism. The tryptophyl-tyrosyl-methioninium (Tyr-Met) (with W-105) cross-link spans 226–252 (YVNPEGPDHSGEPLSAAAAIRATFGNM). His-267 lines the heme b pocket.

The protein belongs to the peroxidase family. Peroxidase/catalase subfamily. As to quaternary structure, homodimer or homotetramer. Requires heme b as cofactor. In terms of processing, formation of the three residue Trp-Tyr-Met cross-link is important for the catalase, but not the peroxidase activity of the enzyme.

It catalyses the reaction H2O2 + AH2 = A + 2 H2O. The catalysed reaction is 2 H2O2 = O2 + 2 H2O. Its function is as follows. Bifunctional enzyme with both catalase and broad-spectrum peroxidase activity. This chain is Catalase-peroxidase, found in Escherichia coli O1:K1 / APEC.